The sequence spans 171 residues: LIM domain transcription factor LMO4-A (171 aa).

Positions 1 to 19 are enriched in polar residues; sequence MVNNRSSESTTTAVSSNGS. Positions 1–21 are disordered; it reads MVNNRSSESTTTAVSSNGSPP. LIM zinc-binding domains follow at residues 22 to 84 and 86 to 148; these read KACA…LFGN and GACN…GLLN.

As to expression, at the start of gastrulation (stage 10), expressed in the mesodermal marginal zone. Shortly after (stage 11), expression is down-regulated in the dorsal most region. During neurulation, expressed in the neural plate and ventral epidermis. At late neurula stages, also expressed more rostrally, and then in the brain, migrating neural crests and ventral epidermis.

Functionally, acts as a positive cofactor of GATA transcription factors to establish the identity of the ventral mesoderm during gastrulation. Down-regulation in the dorsal mesoderm is necessary for the proper formation of this territory since, when present, lmo4 may bind ldb1 and restrict the availability of this cofactor for Spemman organizer transcription factors. At neurula stages, suppresses primary neuron differentiation and modulates gene expression at the Isthmic Organizer of the midbrain-hindbrain boundary. The chain is LIM domain transcription factor LMO4-A (lmo4-a) from Xenopus laevis (African clawed frog).